The sequence spans 311 residues: Putative pyruvate, phosphate dikinase regulatory protein (311 aa).

Gly180–Thr187 contributes to the ADP binding site.

Belongs to the pyruvate, phosphate/water dikinase regulatory protein family. PDRP subfamily.

It catalyses the reaction N(tele)-phospho-L-histidyl/L-threonyl-[pyruvate, phosphate dikinase] + ADP = N(tele)-phospho-L-histidyl/O-phospho-L-threonyl-[pyruvate, phosphate dikinase] + AMP + H(+). It carries out the reaction N(tele)-phospho-L-histidyl/O-phospho-L-threonyl-[pyruvate, phosphate dikinase] + phosphate + H(+) = N(tele)-phospho-L-histidyl/L-threonyl-[pyruvate, phosphate dikinase] + diphosphate. Functionally, bifunctional serine/threonine kinase and phosphorylase involved in the regulation of the pyruvate, phosphate dikinase (PPDK) by catalyzing its phosphorylation/dephosphorylation. This Paramagnetospirillum magneticum (strain ATCC 700264 / AMB-1) (Magnetospirillum magneticum) protein is Putative pyruvate, phosphate dikinase regulatory protein.